We begin with the raw amino-acid sequence, 235 residues long: Cytochrome c oxidase subunit 2 (235 aa).

The Mitochondrial intermembrane portion of the chain corresponds to 1 to 14; it reads MPYPMQLGFQDATS. A helical transmembrane segment spans residues 15 to 45; that stretch reads PIMEELMYFHDHTLMIVFLISSLVLYIIILM. Over 46–59 the chain is Mitochondrial matrix; sequence LTTKLTHTSTMDAQ. Residues 60–87 form a helical membrane-spanning segment; that stretch reads EVETIWTILPAVILILIALPSLRILYMM. The Mitochondrial intermembrane segment spans residues 88–235; it reads DEIYNPYLTV…MQSFLSYLYI (148 aa). Residues His161, Cys196, Glu198, Cys200, His204, and Met207 each contribute to the Cu cation site. Glu198 is a binding site for Mg(2+). Tyr218 bears the Phosphotyrosine mark.

Belongs to the cytochrome c oxidase subunit 2 family. As to quaternary structure, component of the cytochrome c oxidase (complex IV, CIV), a multisubunit enzyme composed of 14 subunits. The complex is composed of a catalytic core of 3 subunits MT-CO1, MT-CO2 and MT-CO3, encoded in the mitochondrial DNA, and 11 supernumerary subunits COX4I, COX5A, COX5B, COX6A, COX6B, COX6C, COX7A, COX7B, COX7C, COX8 and NDUFA4, which are encoded in the nuclear genome. The complex exists as a monomer or a dimer and forms supercomplexes (SCs) in the inner mitochondrial membrane with NADH-ubiquinone oxidoreductase (complex I, CI) and ubiquinol-cytochrome c oxidoreductase (cytochrome b-c1 complex, complex III, CIII), resulting in different assemblies (supercomplex SCI(1)III(2)IV(1) and megacomplex MCI(2)III(2)IV(2)). Found in a complex with TMEM177, COA6, COX18, COX20, SCO1 and SCO2. Interacts with TMEM177 in a COX20-dependent manner. Interacts with COX20. Interacts with COX16. Cu cation serves as cofactor.

It is found in the mitochondrion inner membrane. It carries out the reaction 4 Fe(II)-[cytochrome c] + O2 + 8 H(+)(in) = 4 Fe(III)-[cytochrome c] + 2 H2O + 4 H(+)(out). Component of the cytochrome c oxidase, the last enzyme in the mitochondrial electron transport chain which drives oxidative phosphorylation. The respiratory chain contains 3 multisubunit complexes succinate dehydrogenase (complex II, CII), ubiquinol-cytochrome c oxidoreductase (cytochrome b-c1 complex, complex III, CIII) and cytochrome c oxidase (complex IV, CIV), that cooperate to transfer electrons derived from NADH and succinate to molecular oxygen, creating an electrochemical gradient over the inner membrane that drives transmembrane transport and the ATP synthase. Cytochrome c oxidase is the component of the respiratory chain that catalyzes the reduction of oxygen to water. Electrons originating from reduced cytochrome c in the intermembrane space (IMS) are transferred via the dinuclear copper A center (CU(A)) of subunit 2 and heme A of subunit 1 to the active site in subunit 1, a binuclear center (BNC) formed by heme A3 and copper B (CU(B)). The BNC reduces molecular oxygen to 2 water molecules using 4 electrons from cytochrome c in the IMS and 4 protons from the mitochondrial matrix. This Didelphis virginiana (North American opossum) protein is Cytochrome c oxidase subunit 2 (MT-CO2).